Here is a 268-residue protein sequence, read N- to C-terminus: Microtubule-associated protein RP/EB family member 1 (268 aa).

Residue Ala-2 is modified to N-acetylalanine. The Calponin-homology (CH) domain maps to 14–116; sequence NLSRHDMLAW…FVQWFKKFFD (103 aa). Position 66 is an N6-crotonyllysine (Lys-66). A Phosphotyrosine modification is found at Tyr-124. Residues 124-268 form an interaction with MTUS2/TIP150 region; sequence YDPVAARQGQ…GGPQEEQEEY (145 aa). Positions 147 to 160 are enriched in low complexity; that stretch reads NKPKKPLSSSSAAP. Residues 147-184 form a disordered region; that stretch reads NKPKKPLSSSSAAPQRPITTHRTTATPKAGPGVVRKNP. Ser-155 carries the phosphoserine modification. Positions 163–172 are enriched in polar residues; it reads PITTHRTTAT. Residues 185–255 form the EB1 C-terminal domain; that stretch reads GVGNGDDEAA…LYATDEGFVI (71 aa). The interaction with CDK5RAP2 stretch occupies residues 185-268; the sequence is GVGNGDDEAA…GGPQEEQEEY (84 aa). The interval 206 to 211 is interaction with APC; the sequence is TVEDLE. Residues 208–268 form a DCTN1-binding region; that stretch reads EDLEKERDFY…GGPQEEQEEY (61 aa). N6-acetyllysine is present on Lys-220. The tract at residues 220-242 is APC-binding; the sequence is KLRNIELICQENEGENNPVLQRI. The interaction with SKA1 stretch occupies residues 232–255; the sequence is EGENNPVLQRIVDILYATDEGFVI.

This sequence belongs to the MAPRE family. In terms of assembly, homodimer. Heterodimer with MAPRE3. Interacts with DCTN1, DCTN2, TERF1 and dynein intermediate chain. Interaction with DIAPH1 and DIAPH2. Interacts (via C-terminal residues 206-211) with APC (via C-terminal residues 2674-2845); the interaction inhibits association with and bundling of F-actin. Interacts with CLASP2, DST, KIF2C and STIM1; probably required for their targeting to the growing microtubule plus ends. Interacts with MTUS2; interaction is direct and probably targets MTUS2 to microtubules. Interacts (via C-terminus) with SKA1 (via SXIP motif); the interaction is direct and stabilizes the kinetochore-microtubule attachment of the SKA1 complex. Interacts with APC2. Interacts with CLASP1. Interacts with CDK5RAP2. Interacts with MACF1. Interacts with RABL2/RABL2A; binds preferentially to GTP-bound RABL2. Interacts with KCNAB2. Interacts (via C-terminus) with CLIP1. Interacts with SLAIN2 and SLAIN1. Interacts with KIF18B; this interaction is required for efficient accumulation of KIF18B at microtubule plus ends. Interacts with MISP. Interacts with KNSTRN. Interacts with NCKAP5L. Interacts with CAMSAP2. Interacts with PDE4DIP isoform 13/MMG8/SMYLE; this interaction is required for its recruitment to the Golgi apparatus. Forms a pericentrosomal complex with AKAP9, CDK5RAP2 and PDE4DIP isoform 13/MMG8/SMYLE; within this complex, MAPRE1 binding to CDK5RAP2 may be mediated by PDE4DIP. Interacts with AKNA. Interacts with GAS2L1, GAS2L2, and GAS2L3. Post-translationally, acetylation at Lys-220 by KAT2B/PCAF promotes dynamic kinetochore-microtubule interactions in early mitosis. In terms of processing, crotonylated by KAT5 during mitosis, promoting astral microtubule plasticity and dynamic connection between astral microtubules and the cortex during mitotic chromosome segregation, thereby ensuring accurate spindle positioning in mitosis. Decrotonylated by HDAC3.

Its subcellular location is the cytoplasm. The protein resides in the cytoskeleton. The protein localises to the microtubule organizing center. It localises to the centrosome. It is found in the golgi apparatus. Its subcellular location is the spindle. The protein resides in the spindle pole. Functionally, plus-end tracking protein (+TIP) that binds to the plus-end of microtubules and regulates the dynamics of the microtubule cytoskeleton. Recruits other +TIP proteins to microtubules by binding to a conserved Ser-X-Leu-Pro (SXLP) motif in their polypeptide chains. Promotes cytoplasmic microtubule nucleation and elongation. Involved in mitotic spindle positioning by stabilizing microtubules and promoting dynamic connection between astral microtubules and the cortex during mitotic chromosome segregation. Assists chromosome alignment in metaphase by recruiting the SKA complex to the spindle and stabilizing its interactions with microtubule bundles (K-fibers). Also acts as a regulator of minus-end microtubule organization: interacts with the complex formed by AKAP9 and PDE4DIP, leading to recruit CAMSAP2 to the Golgi apparatus, thereby tethering non-centrosomal minus-end microtubules to the Golgi, an important step for polarized cell movement. Promotes elongation of CAMSAP2-decorated microtubule stretches on the minus-end of microtubules. Acts as a regulator of autophagosome transport via interaction with CAMSAP2. Functions downstream of Rho GTPases and DIAPH1 in stable microtubule formation. May play a role in cell migration. This chain is Microtubule-associated protein RP/EB family member 1 (MAPRE1), found in Bos taurus (Bovine).